A 393-amino-acid chain; its full sequence is Na(+)/H(+) antiporter NhaA 2 (393 aa).

11 helical membrane passes run 18 to 38 (SGGL…NSQL), 53 to 73 (LSVQ…MVGL), 91 to 111 (ILPG…YLAF), 120 to 140 (GWAI…SLLG), 149 to 169 (VFLA…IGLF), 172 to 192 (TGVS…LVAL), 208 to 228 (LVLW…GVLL), 263 to 283 (FIIV…GLGM), 294 to 314 (VAAG…LLLV), 332 to 352 (GTTL…LLAF), and 363 to 383 (IGIL…LRFS).

Belongs to the NhaA Na(+)/H(+) (TC 2.A.33) antiporter family.

The protein localises to the cell inner membrane. The catalysed reaction is Na(+)(in) + 2 H(+)(out) = Na(+)(out) + 2 H(+)(in). In terms of biological role, na(+)/H(+) antiporter that extrudes sodium in exchange for external protons. The chain is Na(+)/H(+) antiporter NhaA 2 from Brucella anthropi (strain ATCC 49188 / DSM 6882 / CCUG 24695 / JCM 21032 / LMG 3331 / NBRC 15819 / NCTC 12168 / Alc 37) (Ochrobactrum anthropi).